Consider the following 361-residue polypeptide: tRNA/tmRNA (uracil-C(5))-methyltransferase (361 aa).

Residues Q185, Y213, N218, E234, and D294 each coordinate S-adenosyl-L-methionine. The active-site Nucleophile is C319. E353 (proton acceptor) is an active-site residue.

Belongs to the class I-like SAM-binding methyltransferase superfamily. RNA M5U methyltransferase family. TrmA subfamily.

It carries out the reaction uridine(54) in tRNA + S-adenosyl-L-methionine = 5-methyluridine(54) in tRNA + S-adenosyl-L-homocysteine + H(+). The catalysed reaction is uridine(341) in tmRNA + S-adenosyl-L-methionine = 5-methyluridine(341) in tmRNA + S-adenosyl-L-homocysteine + H(+). Dual-specificity methyltransferase that catalyzes the formation of 5-methyluridine at position 54 (m5U54) in all tRNAs, and that of position 341 (m5U341) in tmRNA (transfer-mRNA). The protein is tRNA/tmRNA (uracil-C(5))-methyltransferase of Pseudomonas putida (strain ATCC 700007 / DSM 6899 / JCM 31910 / BCRC 17059 / LMG 24140 / F1).